The primary structure comprises 442 residues: Syndecan-3 (442 aa).

Disordered stretches follow at residues 1–25 and 55–85; these read MKPG…GPGA and RPVD…SGYF. The signal sequence occupies residues 1 to 44; the sequence is MKPGPPRRGTAQGQRVDTATHGPGARGLLLPPLLLLLLAGRAAG. Over 45 to 387 the chain is Extracellular; that stretch reads AQRWRNENFE…SILERKEVLV (343 aa). The segment covering 61–75 has biased composition (acidic residues); the sequence is GSGDDDSFPDDELDD. S78, S80, S82, and S89 each carry an O-linked (Xyl...) (glycosaminoglycan) serine glycan. Residue T107 is glycosylated (O-linked (GalNAc) threonine; by GALNT13). Disordered regions lie at residues 151 to 175, 180 to 199, 225 to 244, 252 to 327, and 339 to 372; these read EEPS…TGAP, APAT…PATA, ATTP…DTEA, TATS…TTQP, and AAAK…SSAA. Over residues 157–175 the composition is skewed to low complexity; sequence ATTISTTTSTTAATTTGAP. An O-linked (GalNAc) serine; by GALNT13 glycan is attached at S161. O-linked (GalNAc) threonine; by GALNT13 glycans are attached at residues T162, T163, T170, and T172. Low complexity predominate over residues 276 to 287; sequence TLPLGTTAPGPT. Residues 289 to 303 are compositionally biased toward polar residues; it reads VAQTPTPESLLTTTQ. 2 O-linked (Xyl...) (glycosaminoglycan) serine glycosylation sites follow: S315 and S367. Residues 388-408 form a helical membrane-spanning segment; the sequence is AVIVGGVVGALFAAFLVTLLI. Phosphotyrosine occurs at positions 409, 419, 431, and 441. Residues 409–442 lie on the Cytoplasmic side of the membrane; sequence YRMKKKDEGSYTLEEPKQASVTYQKPDKQEEFYA. The disordered stretch occupies residues 419–442; that stretch reads YTLEEPKQASVTYQKPDKQEEFYA. A compositionally biased stretch (basic and acidic residues) spans 433-442; sequence KPDKQEEFYA.

It belongs to the syndecan proteoglycan family. As to quaternary structure, interacts with TIAM1. Interacts (via heparan sulfate chains) with PTN; this interaction mediates the neurite outgrowth-promoting signal from PTN to the cytoskeleton of growing neurites; this interaction mediates osteoblast recruitment. Interacts with MDK; this interaction induces SDC3 clustering; this interaction induces neuronal cell adhesion and neurite outgrowth. Post-translationally, O-glycosylated within the Thr/Ser-rich region which could interact with lectin domains on other molecules. High levels in neonatal brain, heart, and Schwann cells, barely detectable in neonatal or adult liver, or adult brain.

It localises to the cell membrane. Its function is as follows. Cell surface proteoglycan that may bear heparan sulfate. May have a role in the organization of cell shape by affecting the actin cytoskeleton, possibly by transferring signals from the cell surface in a sugar-dependent mechanism. This is Syndecan-3 (Sdc3) from Rattus norvegicus (Rat).